Here is a 270-residue protein sequence, read N- to C-terminus: Basigin (270 aa).

Residues 1 to 21 (MAAVLFALLALALLRAGGASA) form the signal peptide. The region spanning 22–103 (AAGTVTTSVQ…TGEATLTVDG (82 aa)) is the Ig-like C2-type domain. Residues 22 to 207 (AAGTVTTSVQ…VTLRVRSRLA (186 aa)) are Extracellular-facing. Disulfide bonds link C41-C87 and C126-C185. N-linked (GlcNAc...) asparagine glycans are attached at residues N44, N75, N152, and N186. Positions 105 to 203 (PRIKAVKKSE…DAAVVTLRVR (99 aa)) constitute an Ig-like V-type domain. Residues 208–228 (ALWPFLGIVAEVLVLVTVIFI) traverse the membrane as a helical segment. At 229 to 270 (YEKRRKPDEVLDDEDAGAAPLKSSGHHVNDDKGKNVRQRNAS) the chain is on the cytoplasmic side. A disordered region spans residues 239–270 (LDDEDAGAAPLKSSGHHVNDDKGKNVRQRNAS). S252 carries the phosphoserine modification.

As to quaternary structure, homooligomer. Interacts with VEGFA, KDR/VEGFR2, PPIA/CYPA, SLC1A3, SLC16A12, SLC16A11, ATP1B2, MAG, L1CAM and AJAP1. Interacts with PPIL2; regulates BSG transport to the cell membrane. Interacts with XKR8; promoting its localization at the cell membrane. Interacts with SLC16A3; interaction mediates SLC16A3 targeting to the plasma membrane. Interacts with SLC16A1; interaction mediates SLC16A1 targeting to the plasma membrane. Interacts with SLC16A6; this interaction mediates targeting to the plasma membrane.

The protein resides in the cell membrane. Its subcellular location is the endoplasmic reticulum membrane. The protein localises to the basolateral cell membrane. Functionally, signaling receptor for cyclophilins, essential for PPIA/CYPA and PPIB/CYPB-dependent signaling related to chemotaxis and adhesion of immune cells. Plays an important role in targeting the monocarboxylate transporters SLC16A1/GLUT1, SLC16A3, SLC16A8, SLC16A11 and SLC16A12 to the plasma membrane. Acts as a coreceptor for vascular endothelial growth factor receptor 2 (KDR/VEGFR2) in endothelial cells enhancing its VEGFA-mediated activation and downstream signaling. Promotes angiogenesis through EPAS1/HIF2A-mediated up-regulation of VEGFA and KDR/VEGFR2 in endothelial cells. This Oryctolagus cuniculus (Rabbit) protein is Basigin (BSG).